A 318-amino-acid polypeptide reads, in one-letter code: MYAREYRSTRPHKAIFFHLSCLTLICSAQVYAKPDMRPLGPNIADKGSVFYHFSATSFDSVDGTRHYRVWTAVPNTTAPASGYPILYMLDGNAVMDRLDDELLKQLSEKTPPVIVAVGYQTNLPFDLNSRAYDYTPAAESRKTDLHSGRFSRKSGGSNNFRQLLETRIAPKVEQGLNIDRQRRGLWGHSYGGLFVLDSWLSSSYFRSYYSASPSLGRGYDALLSRVTAVEPLQFCTKHLAIMEGSATQGDNRETHAVGVLSKIHTTLTILKDKGVNAVFWDFPNLGHGPMFNASFRQALLDISGENANYTAGCHELSH.

Residues 13–32 (KAIFFHLSCLTLICSAQVYA) traverse the membrane as a helical segment. Catalysis depends on residues S189 and H287.

The protein belongs to the esterase D family. In terms of assembly, monomer.

The protein resides in the cell inner membrane. It carries out the reaction enterobactin + H2O = N-(2,3-dihydroxybenzoyl)-L-serine trimer. The enzyme catalyses monoglucosyl-enterobactin + H2O = [N-(2,3-dihydroxybenzoyl)-L-seryl]2-N-(C-5-[deoxy-beta-D-glucosyl]-2,3-dihydroxybenzoyl)-L-serine + H(+). The catalysed reaction is diglucosyl-enterobactin + H2O = N-(2,3-dihydroxybenzoyl)-L-seryl-[N-(C-5-[deoxy-beta-D-glucosyl]-2,3-dihydroxybenzoyl)-L-serine]2 + H(+). It catalyses the reaction triglucosyl-enterobactin + H2O = [N-(C-5-[deoxy-beta-D-glucosyl]-2,3-dihydroxybenzoyl)-L-serine]3 + H(+). Functionally, catalyzes the hydrolysis of both the apo and Fe3(+)-bound forms of enterobactin (Ent), monoglucosyl-C-Ent (MGE), diglucosyl-C-Ent (DGE) and triglucosyl-C-Ent (TGE). It prefers apo siderophores as substrates and hydrolyzes the Fe3(+)-bound siderophores very inefficiently. Tends to hydrolyze the trilactone just once to produce linearized trimers. May hydrolyze and linearize some or all of apo enterobactins while they are being exported. This Escherichia coli O6:H1 (strain CFT073 / ATCC 700928 / UPEC) protein is Apo-salmochelin esterase.